A 727-amino-acid chain; its full sequence is Glycerol-3-phosphate dehydrogenase, mitochondrial (727 aa).

The transit peptide at M1–A42 directs the protein to the mitochondrion. Position 71–99 (D71–E99) interacts with FAD. Y601 is subject to Phosphotyrosine. 2 EF-hand domains span residues S623–Q658 and M659–G694. Ca(2+) is bound by residues D672, N674, N676, Q678, and E683.

This sequence belongs to the FAD-dependent glycerol-3-phosphate dehydrogenase family. FAD is required as a cofactor.

The protein localises to the mitochondrion. The catalysed reaction is a quinone + sn-glycerol 3-phosphate = dihydroxyacetone phosphate + a quinol. Its pathway is polyol metabolism; glycerol degradation via glycerol kinase pathway; glycerone phosphate from sn-glycerol 3-phosphate (aerobic route): step 1/1. Its activity is regulated as follows. Calcium-binding enhance the activity of the enzyme. Calcium-responsive mitochondrial glycerol-3-phosphate dehydrogenase which seems to be a key component of the pancreatic beta-cell glucose-sensing device. The protein is Glycerol-3-phosphate dehydrogenase, mitochondrial (GPD2) of Macaca fascicularis (Crab-eating macaque).